Reading from the N-terminus, the 208-residue chain is MSHFLYLAPEIQLPFSPLTSTEFELIRRKARELWQNEARWSTSSVTTYSGSYREKQLDEASCHRLAQRFGQPHFEYKPAPLPGGSAYNALPGQAGSQEAADGKGRLPDITSPSQDSTLNIKHKVAHQSWSSGTSRPTCLAYRPRHLSPSSKPKRPGFELLMSYRNRGRKLLRQLQRQWDYENKLGSSDDSDTDRFSSVTSGSSRRKFK.

Disordered regions lie at residues 91–115 (PGQA…PSQD), 127–156 (QSWS…KRPG), and 182–208 (NKLG…RKFK). Residues 127-136 (QSWSSGTSRP) show a composition bias toward polar residues.

This is an uncharacterized protein from Rattus norvegicus (Rat).